Consider the following 376-residue polypeptide: Serpin B6 (376 aa).

N-acetylmethionine is present on Met-1. Position 151 is a phosphoserine (Ser-151). An N6-acetyllysine modification is found at Lys-195.

This sequence belongs to the serpin family. Ov-serpin subfamily. Forms a complex with the monomeric form of beta-tryptase.

It localises to the cytoplasm. Inhibitor of cathepsin G, kallikrein-8 and thrombin. May play an important role in the inner ear in the protection against leakage of lysosomal content during stress. May be involved in the regulation of serine proteinases present in the brain or extravasated from the blood. The polypeptide is Serpin B6 (SERPINB6) (Pongo abelii (Sumatran orangutan)).